The primary structure comprises 965 residues: Phosphoenolpyruvate carboxylase (965 aa).

Ser-11 carries the phosphoserine modification. Catalysis depends on residues His-173 and Lys-601.

Belongs to the PEPCase type 1 family. As to quaternary structure, homotetramer. It depends on Mg(2+) as a cofactor.

It localises to the cytoplasm. The enzyme catalyses oxaloacetate + phosphate = phosphoenolpyruvate + hydrogencarbonate. It participates in photosynthesis; C3 acid pathway. With respect to regulation, by light-reversible phosphorylation. Functionally, through the carboxylation of phosphoenolpyruvate (PEP) it forms oxaloacetate, a four-carbon dicarboxylic acid source for the tricarboxylic acid cycle. The sequence is that of Phosphoenolpyruvate carboxylase (PPC1) from Solanum tuberosum (Potato).